A 245-amino-acid chain; its full sequence is Heavy metal-associated isoprenylated plant protein 1 (245 aa).

The 65-residue stretch at 28-92 (PVHVVLKIDF…KLQKKSKKKV (65 aa)) folds into the HMA 1 domain. A metal cation contacts are provided by C39 and C42. Positions 91 to 113 (KVELISPKPKKDTKENNEKKAND) are disordered. Residues 99–113 (PKKDTKENNEKKAND) show a composition bias toward basic and acidic residues. Positions 121–188 (VTTVVLKVNC…KLKKTVQVVP (68 aa)) constitute an HMA 2 domain. A metal cation contacts are provided by C132 and C135. C242 is subject to Cysteine methyl ester. Residue C242 is the site of S-farnesyl cysteine attachment. The propeptide at 243-245 (SVM) is removed in mature form.

This sequence belongs to the HIPP family.

Heavy-metal-binding protein. This Arabidopsis thaliana (Mouse-ear cress) protein is Heavy metal-associated isoprenylated plant protein 1.